We begin with the raw amino-acid sequence, 250 residues long: Cell division protein ZapD (250 aa).

The protein belongs to the ZapD family. As to quaternary structure, interacts with FtsZ.

Its subcellular location is the cytoplasm. In terms of biological role, cell division factor that enhances FtsZ-ring assembly. Directly interacts with FtsZ and promotes bundling of FtsZ protofilaments, with a reduction in FtsZ GTPase activity. The sequence is that of Cell division protein ZapD from Yersinia pestis bv. Antiqua (strain Antiqua).